A 493-amino-acid chain; its full sequence is Cysteine--tRNA ligase (493 aa).

C29 contributes to the Zn(2+) binding site. Residues 31–41 carry the 'HIGH' region motif; the sequence is VTVYDLSHIGH. C209, H234, and E238 together coordinate Zn(2+). Positions 266–270 match the 'KMSKS' region motif; the sequence is KMSKS. Residue K269 coordinates ATP.

It belongs to the class-I aminoacyl-tRNA synthetase family. Monomer. It depends on Zn(2+) as a cofactor.

It is found in the cytoplasm. The catalysed reaction is tRNA(Cys) + L-cysteine + ATP = L-cysteinyl-tRNA(Cys) + AMP + diphosphate. This chain is Cysteine--tRNA ligase, found in Syntrophobacter fumaroxidans (strain DSM 10017 / MPOB).